Reading from the N-terminus, the 746-residue chain is Histone-lysine N-methyltransferase EZH2 (746 aa).

The tract at residues 1–340 (MGQTGKKSEK…AKEFAAALTA (340 aa)) is interaction with DNMT1, DNMT3A and DNMT3B. Ser-21 bears the Phosphoserine; by PKB/AKT1 mark. Residues 39-68 (KSMFSSNRQKILERTEILNQEWKQRRIQPV) are interaction with EED. Ser-75 is a glycosylation site (O-linked (GlcNAc) serine). A Phosphoserine modification is found at Ser-76. The disordered stretch occupies residues 180–222 (QYNDDDDDDDGDDPEEREEKQKDLEDHRDDKESRPPRKFPSDK). The segment covering 182 to 195 (NDDDDDDDGDDPEE) has biased composition (acidic residues). Positions 196–222 (REEKQKDLEDHRDDKESRPPRKFPSDK) are enriched in basic and acidic residues. The segment at 329-522 (EGAKEFAAAL…SSNHVYNYQP (194 aa)) is interaction with CDYL. The residue at position 339 (Thr-339) is a Phosphothreonine. The disordered stretch occupies residues 340-426 (AERIKTPPKR…PIKMKPNIEP (87 aa)). Thr-345 carries the phosphothreonine; by CDK1 and CDK2 modification. A compositionally biased stretch (basic residues) spans 345–357 (TPPKRPGGRRRGR). Phosphoserine is present on residues Ser-363 and Ser-366. Thr-367 is subject to Phosphothreonine. Positions 374-385 (ESKDTDSDREAG) are enriched in basic and acidic residues. The residue at position 487 (Thr-487) is a Phosphothreonine. The region spanning 503-605 (CRKIQLKKDG…SKNVSCKNCS (103 aa)) is the CXC domain. The region spanning 612–727 (KHLLLAPSDV…TGEELFFDYR (116 aa)) is the SET domain. Lys-634 participates in a covalent cross-link: Glycyl lysine isopeptide (Lys-Gly) (interchain with G-Cter in SUMO2).

It belongs to the class V-like SAM-binding methyltransferase superfamily. Histone-lysine methyltransferase family. EZ subfamily. Component of the PRC2/EED-EZH2 complex, which includes EED, EZH2, SUZ12, RBBP4 and RBBP7 and possibly AEBP2. The minimum components required for methyltransferase activity of the PRC2/EED-EZH2 complex are EED, EZH2 and SUZ12. The PRC2 complex may also interact with DNMT1, DNMT3A, DNMT3B and PHF1 via the EZH2 subunit and with SIRT1 via the SUZ12 subunit. Interacts with HDAC1 and HDAC2. Binds ATRX via the SET domain. Interacts with PRAME. Interacts with CDYL. Interacts with BMAL1, CLOCK and CRY1. Interacts with DNMT3L; the interaction is direct. Interacts with EZHIP; the interaction blocks EZH2 methyltransferase activity. Interacts with ZNF263; recruited to the SIX3 promoter along with other proteins involved in chromatin modification and transcriptional corepression where it contributes to transcriptional repression. Interacts with ARMC12. Interacts with ZMYND8; the interaction is dependent on the presence of chromatin. Interacts with DDX18; this interaction inhibits the PRC2 complex. In terms of processing, phosphorylated by AKT1. Phosphorylation by AKT1 reduces methyltransferase activity. Phosphorylation at Thr-345 by CDK1 and CDK2 promotes maintenance of H3K27me3 levels at EZH2-target loci, thus leading to epigenetic gene silencing. Post-translationally, sumoylated. Glycosylated: O-GlcNAcylation at Ser-75 by OGT increases stability of EZH2 and facilitates the formation of H3K27me3 by the PRC2/EED-EZH2 complex.

The protein localises to the nucleus. It catalyses the reaction L-lysyl(27)-[histone H3] + 3 S-adenosyl-L-methionine = N(6),N(6),N(6)-trimethyl-L-lysyl(27)-[histone H3] + 3 S-adenosyl-L-homocysteine + 3 H(+). Polycomb group (PcG) protein. Catalytic subunit of the PRC2/EED-EZH2 complex, which methylates 'Lys-9' (H3K9me) and 'Lys-27' (H3K27me) of histone H3, leading to transcriptional repression of the affected target gene. Able to mono-, di- and trimethylate 'Lys-27' of histone H3 to form H3K27me1, H3K27me2 and H3K27me3, respectively. Displays a preference for substrates with less methylation, loses activity when progressively more methyl groups are incorporated into H3K27, H3K27me0 &gt; H3K27me1 &gt; H3K27me2. Compared to EZH1-containing complexes, it is more abundant in embryonic stem cells and plays a major role in forming H3K27me3, which is required for embryonic stem cell identity and proper differentiation. The PRC2/EED-EZH2 complex may also serve as a recruiting platform for DNA methyltransferases, thereby linking two epigenetic repression systems. EZH2 can also methylate non-histone proteins such as the transcription factor GATA4 and the nuclear receptor RORA. Regulates the circadian clock via histone methylation at the promoter of the circadian genes. Essential for the CRY1/2-mediated repression of the CLOCK-BMAL1 transcriptional activation of PER1/2. Involved in the di and trimethylation of 'Lys-27' of histone H3 on PER1/2 promoters which is necessary for the CRY1/2 proteins to inhibit transcription. The chain is Histone-lysine N-methyltransferase EZH2 (EZH2) from Macaca fascicularis (Crab-eating macaque).